Here is an 84-residue protein sequence, read N- to C-terminus: Large ribosomal subunit protein bL27 (84 aa).

Positions 1–25 (MAHKKGAGSTKNGRDSKPKMLGVKR) are disordered.

It belongs to the bacterial ribosomal protein bL27 family.

This Dehalococcoides mccartyi (strain ATCC BAA-2266 / KCTC 15142 / 195) (Dehalococcoides ethenogenes (strain 195)) protein is Large ribosomal subunit protein bL27.